A 149-amino-acid chain; its full sequence is MIKIDVKIIDPRMADQLPAYATPGSAGLDLRACLDAPLTLLPNAWQLVPTGIAIYLKDPKFAAMILPRSGLGHKHGIVLGNLVGLIDSDYQGQLMVSAWNRSDVAFTIEPMERIAQLVIVPVLQAQFNVVSEFPASARGEGGYGSTGKG.

Residues 68 to 70 (RSG), asparagine 81, 85 to 87 (LID), and methionine 95 each bind substrate.

This sequence belongs to the dUTPase family. Mg(2+) is required as a cofactor.

It catalyses the reaction dUTP + H2O = dUMP + diphosphate + H(+). It functions in the pathway pyrimidine metabolism; dUMP biosynthesis; dUMP from dCTP (dUTP route): step 2/2. In terms of biological role, this enzyme is involved in nucleotide metabolism: it produces dUMP, the immediate precursor of thymidine nucleotides and it decreases the intracellular concentration of dUTP so that uracil cannot be incorporated into DNA. The polypeptide is Deoxyuridine 5'-triphosphate nucleotidohydrolase (Albidiferax ferrireducens (strain ATCC BAA-621 / DSM 15236 / T118) (Rhodoferax ferrireducens)).